The primary structure comprises 324 residues: Glyoxylate/hydroxypyruvate reductase B (324 aa).

Catalysis depends on residues R237 and E266. H285 (proton donor) is an active-site residue.

It belongs to the D-isomer specific 2-hydroxyacid dehydrogenase family. GhrB subfamily. In terms of assembly, homodimer.

The protein localises to the cytoplasm. The catalysed reaction is glycolate + NADP(+) = glyoxylate + NADPH + H(+). It catalyses the reaction (R)-glycerate + NAD(+) = 3-hydroxypyruvate + NADH + H(+). The enzyme catalyses (R)-glycerate + NADP(+) = 3-hydroxypyruvate + NADPH + H(+). Its function is as follows. Catalyzes the NADPH-dependent reduction of glyoxylate and hydroxypyruvate into glycolate and glycerate, respectively. This is Glyoxylate/hydroxypyruvate reductase B from Salmonella schwarzengrund (strain CVM19633).